A 245-amino-acid chain; its full sequence is Acetylglutamate kinase (245 aa).

Substrate-binding positions include 41–42 (GG), Arg63, and Asn156.

This sequence belongs to the acetylglutamate kinase family. ArgB subfamily.

It localises to the cytoplasm. The catalysed reaction is N-acetyl-L-glutamate + ATP = N-acetyl-L-glutamyl 5-phosphate + ADP. It participates in amino-acid biosynthesis; L-arginine biosynthesis; N(2)-acetyl-L-ornithine from L-glutamate: step 2/4. Functionally, catalyzes the ATP-dependent phosphorylation of N-acetyl-L-glutamate. This Streptococcus sanguinis (strain SK36) protein is Acetylglutamate kinase.